We begin with the raw amino-acid sequence, 107 residues long: Ig kappa chain V region 4135 (107 aa).

The tract at residues 1 to 24 (ADIVMTQTPASVSEPVGGTVTIKC) is framework-1. Positions 25-35 (QTSQSIDDYLS) are complementarity-determining-1. The interval 36–50 (WYQQKPGQPPKGLIY) is framework-2. A complementarity-determining-2 region spans residues 51–57 (RASTLAS). Positions 58–89 (GVPSRFRGSGSGTDFTLTISDLECADAATYYC) are framework-3. Positions 90–96 (QSTYGVG) are complementarity-determining-3. A framework-4 region spans residues 97–106 (FGGGTEVVVK).

This chain is Ig kappa chain V region 4135, found in Oryctolagus cuniculus (Rabbit).